A 241-amino-acid polypeptide reads, in one-letter code: ATP synthase subunit a (241 aa).

Helical transmembrane passes span asparagine 29–isoleucine 49, valine 54–isoleucine 74, isoleucine 86–proline 106, histidine 114–phenylalanine 134, tryptophan 153–leucine 173, leucine 177–asparagine 197, isoleucine 200–valine 220, and alanine 221–lysine 241.

This sequence belongs to the ATPase A chain family. F-type ATPases have 2 components, CF(1) - the catalytic core - and CF(0) - the membrane proton channel. CF(1) has five subunits: alpha(3), beta(3), gamma(1), delta(1), epsilon(1). CF(0) has three main subunits: a(1), b(2) and c(9-12). The alpha and beta chains form an alternating ring which encloses part of the gamma chain. CF(1) is attached to CF(0) by a central stalk formed by the gamma and epsilon chains, while a peripheral stalk is formed by the delta and b chains.

It is found in the cell membrane. Its function is as follows. Key component of the proton channel; it plays a direct role in the translocation of protons across the membrane. This Wolbachia pipientis wMel protein is ATP synthase subunit a.